The sequence spans 335 residues: MIEADNLNVTSIITDYNPIVDYRPKKLVDYIGQTNVREQMKIFIQAAKMRGDALDHVLLFGPPGLGKTTLANIIANEMEGSLRSTSGPVLEKAGDLAAILTNLEPHDVLFIDEIHRLSPVIEEILYPAMEDYKLDIIIGEGPAARSIKIQIPPFTLVGATTRIGSITSPLRDRFGIVQRLEFYPTKDLQNIISRSAANLSLSITDGGLSEIAKRARGTPRIALRLLRRVRDFAEVRAAGKITNNVAMNALNMLNVDTAGFNFMDRQLLLVIINKFLGGPVGLDNLAAAIGEERETIEDVLEPFLIQQGFLQRTPRGRIATAEAYRHFSLKQSRDI.

The interval 4-183 (ADNLNVTSII…FGIVQRLEFY (180 aa)) is large ATPase domain (RuvB-L). Residues R23, G64, K67, T68, T69, 130-132 (EDY), R173, Y183, and R220 each bind ATP. Residue T68 participates in Mg(2+) binding. The small ATPAse domain (RuvB-S) stretch occupies residues 184 to 254 (PTKDLQNIIS…VAMNALNMLN (71 aa)). Positions 257-335 (TAGFNFMDRQ…HFSLKQSRDI (79 aa)) are head domain (RuvB-H). DNA-binding residues include R293, R312, and R317.

Belongs to the RuvB family. Homohexamer. Forms an RuvA(8)-RuvB(12)-Holliday junction (HJ) complex. HJ DNA is sandwiched between 2 RuvA tetramers; dsDNA enters through RuvA and exits via RuvB. An RuvB hexamer assembles on each DNA strand where it exits the tetramer. Each RuvB hexamer is contacted by two RuvA subunits (via domain III) on 2 adjacent RuvB subunits; this complex drives branch migration. In the full resolvosome a probable DNA-RuvA(4)-RuvB(12)-RuvC(2) complex forms which resolves the HJ.

The protein resides in the cytoplasm. The enzyme catalyses ATP + H2O = ADP + phosphate + H(+). The RuvA-RuvB-RuvC complex processes Holliday junction (HJ) DNA during genetic recombination and DNA repair, while the RuvA-RuvB complex plays an important role in the rescue of blocked DNA replication forks via replication fork reversal (RFR). RuvA specifically binds to HJ cruciform DNA, conferring on it an open structure. The RuvB hexamer acts as an ATP-dependent pump, pulling dsDNA into and through the RuvAB complex. RuvB forms 2 homohexamers on either side of HJ DNA bound by 1 or 2 RuvA tetramers; 4 subunits per hexamer contact DNA at a time. Coordinated motions by a converter formed by DNA-disengaged RuvB subunits stimulates ATP hydrolysis and nucleotide exchange. Immobilization of the converter enables RuvB to convert the ATP-contained energy into a lever motion, pulling 2 nucleotides of DNA out of the RuvA tetramer per ATP hydrolyzed, thus driving DNA branch migration. The RuvB motors rotate together with the DNA substrate, which together with the progressing nucleotide cycle form the mechanistic basis for DNA recombination by continuous HJ branch migration. Branch migration allows RuvC to scan DNA until it finds its consensus sequence, where it cleaves and resolves cruciform DNA. The polypeptide is Holliday junction branch migration complex subunit RuvB (Baumannia cicadellinicola subsp. Homalodisca coagulata).